The primary structure comprises 211 residues: uncharacterized protein (211 aa).

This is an uncharacterized protein from Treponema pallidum (strain Nichols).